Here is a 489-residue protein sequence, read N- to C-terminus: Protein LMBR1L (489 aa).

At 1–21 (MEAPDCEVLSVREQLFHERIR) the chain is on the extracellular side. Residues 1-59 (MEAPDCEVLSVREQLFHERIRECIISTLLFATLYILCHIFLTRFKKPAEFTTVDDADAT) form an interaction with LGB region. The segment at 1–76 (MEAPDCEVLS…LCTFTLAIAL (76 aa)) is LCN1-binding. A helical transmembrane segment spans residues 22 to 42 (ECIISTLLFATLYILCHIFLT). Over 43-66 (RFKKPAEFTTVDDADATVNKIALE) the chain is Cytoplasmic. The chain crosses the membrane as a helical span at residues 67 to 87 (LCTFTLAIALGAVLLLPFSII). Residues 88-114 (SNEVLLSLPRNYYIQWLNGSLIHGLWN) lie on the Extracellular side of the membrane. The chain crosses the membrane as a helical span at residues 115–135 (LVFLFSNLSLIFLMPFAYFFT). Topologically, residues 136–154 (ESEGFAGSRKGVLGRVYET) are cytoplasmic. A helical membrane pass occupies residues 155–175 (VVMLMLLTLLVLGMVWVASAI). Topologically, residues 176-196 (VDNNKASRESLYDFWEYYLPY) are extracellular. A helical membrane pass occupies residues 197–217 (LYSCISFLGVLLLLVCTPLGL). Residues 218-305 (ARMFSVTGKL…NLGYPLAMLC (88 aa)) are Cytoplasmic-facing. The chain crosses the membrane as a helical span at residues 306-326 (LLVLTGLSVLIVAIHILELLI). Residues 327–350 (DEAAMPRGMQGASLGQVSFSKLGS) lie on the Extracellular side of the membrane. A helical transmembrane segment spans residues 351–371 (FGAVVQVVLIFYLMVSSVVGF). The Cytoplasmic segment spans residues 372-388 (YSSPLFRSLRPRWHDTA). Residues 389 to 409 (MTQIIGNCVCLLVLSSALPVF) form a helical membrane-spanning segment. Residues 410 to 431 (SRTLGLTRFDLLGDFGRFNWLG) lie on the Extracellular side of the membrane. Residues 432-452 (NFYIVFLYNAAFAGLTTLCLV) form a helical membrane-spanning segment. Residues 453 to 489 (KTFTAAVRAELIRAFGLDRLPLPVSGFPRASRKTQHQ) lie on the Cytoplasmic side of the membrane.

The protein belongs to the LIMR family. Dimer. Can also form higher oligomers. Interacts with LCN1; this interaction mediates the endocytosis of LCN1. Interacts with UBAC2, FAF2, VCP, AMFR, ZNRF3, CTNNB1, LRP6, GSK3A, GSK3B, FZD6, DVL2 and RNF43. Interaction with LGB and SCGB1A1 is controversial.

The protein resides in the cell membrane. Its subcellular location is the endoplasmic reticulum membrane. In terms of biological role, plays an essential role in lymphocyte development by negatively regulating the canonical Wnt signaling pathway. In association with UBAC2 and E3 ubiquitin-protein ligase AMFR, promotes the ubiquitin-mediated degradation of CTNNB1 and Wnt receptors FZD6 and LRP6. LMBR1L stabilizes the beta-catenin destruction complex that is required for regulating CTNNB1 levels. Acts as a LCN1 receptor and can mediate its endocytosis. The sequence is that of Protein LMBR1L (LMBR1L) from Macaca fascicularis (Crab-eating macaque).